A 23-amino-acid chain; its full sequence is Basic phospholipase A2 homolog Vur-S49 analog (23 aa).

Residues 1–23 (SVLEIGLMLQEETEKNPKTSYSI) form a disordered region.

Post-translationally, contains 7 disulfide bonds. In terms of tissue distribution, expressed by the venom gland.

It localises to the secreted. The polypeptide is Basic phospholipase A2 homolog Vur-S49 analog (Vipera renardi (Steppe viper)).